The following is a 249-amino-acid chain: Undecaprenyl-diphosphatase (249 aa).

The next 8 helical transmembrane spans lie at 11–31 (GLTE…TAIF), 35–55 (PDVG…LIFV), 80–100 (LVLS…FIES), 101–121 (VFSS…LMLL), 135–155 (IPYL…LPGI), 175–195 (AVKY…ILEL), 202–222 (AEQL…LYLV), and 226–246 (VIGG…FFVL).

The protein belongs to the UppP family.

The protein resides in the cell membrane. It catalyses the reaction di-trans,octa-cis-undecaprenyl diphosphate + H2O = di-trans,octa-cis-undecaprenyl phosphate + phosphate + H(+). Its function is as follows. Catalyzes the dephosphorylation of undecaprenyl diphosphate (UPP). The polypeptide is Undecaprenyl-diphosphatase (Methanococcus maripaludis (strain C5 / ATCC BAA-1333)).